We begin with the raw amino-acid sequence, 144 residues long: Transcription antitermination protein NusB (144 aa).

The protein belongs to the NusB family.

Involved in transcription antitermination. Required for transcription of ribosomal RNA (rRNA) genes. Binds specifically to the boxA antiterminator sequence of the ribosomal RNA (rrn) operons. This is Transcription antitermination protein NusB from Buchnera aphidicola subsp. Baizongia pistaciae (strain Bp).